The primary structure comprises 333 residues: Isoaspartyl peptidase/L-asparaginase (333 aa).

The Nucleophile role is filled by Thr-191. Substrate-binding positions include Arg-219 to Asp-222 and Thr-242 to Gly-245.

The protein belongs to the Ntn-hydrolase family. In terms of assembly, heterodimer of an alpha and beta chain produced by autocleavage. This heterodimer may then dimerize in turn, giving rise to a heterotetramer. Post-translationally, cleaved into an alpha and beta chain by autocatalysis; this activates the enzyme. The N-terminal residue of the beta subunit is responsible for the nucleophile hydrolase activity. In terms of tissue distribution, present in testis, brain, liver, kidney, heart and skeletal muscle. In brain, specifically present in the astrocytic lineage. Present in sperm (at protein level).

The protein localises to the cytoplasm. It carries out the reaction L-asparagine + H2O = L-aspartate + NH4(+). It catalyses the reaction Cleavage of a beta-linked Asp residue from the N-terminus of a polypeptide.. Has both L-asparaginase and beta-aspartyl peptidase activity. Is highly active with L-Asp beta-methyl ester. Besides, has catalytic activity toward beta-aspartyl dipeptides and their methyl esters, including beta-L-Asp-L-Phe, beta-L-Asp-L-Phe methyl ester (aspartame), beta-L-Asp-L-Ala, beta-L-Asp-L-Leu and beta-L-Asp-L-Lys. Does not have aspartylglucosaminidase activity and is inactive toward GlcNAc-L-Asn. Likewise, has no activity toward glutamine. May be involved in the production of L-aspartate, which can act as an excitatory neurotransmitter in some brain regions. The chain is Isoaspartyl peptidase/L-asparaginase (Asrgl1) from Rattus norvegicus (Rat).